Consider the following 291-residue polypeptide: Release factor glutamine methyltransferase (291 aa).

Residues 127–131, Asp150, Trp179, and Asn196 each bind S-adenosyl-L-methionine; that span reads GTGSG. Residue 196–199 participates in substrate binding; it reads NPPY.

Belongs to the protein N5-glutamine methyltransferase family. PrmC subfamily.

It carries out the reaction L-glutaminyl-[peptide chain release factor] + S-adenosyl-L-methionine = N(5)-methyl-L-glutaminyl-[peptide chain release factor] + S-adenosyl-L-homocysteine + H(+). Methylates the class 1 translation termination release factors RF1/PrfA and RF2/PrfB on the glutamine residue of the universally conserved GGQ motif. The chain is Release factor glutamine methyltransferase from Thermosynechococcus vestitus (strain NIES-2133 / IAM M-273 / BP-1).